A 364-amino-acid polypeptide reads, in one-letter code: Dihydroorotate dehydrogenase (quinone) (364 aa).

FMN-binding positions include 61–65 (AGFDK) and Thr85. Position 65 (Lys65) interacts with substrate. 110 to 114 (NRMGF) provides a ligand contact to substrate. Asn139 and Asn170 together coordinate FMN. Asn170 lines the substrate pocket. Residue Ser173 is the Nucleophile of the active site. Asn175 lines the substrate pocket. FMN-binding residues include Lys214 and Ala242. Residue 243-244 (NT) coordinates substrate. Residues Gly266, Gly295, and 316-317 (YS) contribute to the FMN site.

Belongs to the dihydroorotate dehydrogenase family. Type 2 subfamily. Monomer. FMN serves as cofactor.

The protein resides in the cell membrane. It catalyses the reaction (S)-dihydroorotate + a quinone = orotate + a quinol. It participates in pyrimidine metabolism; UMP biosynthesis via de novo pathway; orotate from (S)-dihydroorotate (quinone route): step 1/1. Its function is as follows. Catalyzes the conversion of dihydroorotate to orotate with quinone as electron acceptor. The chain is Dihydroorotate dehydrogenase (quinone) from Rhodopseudomonas palustris (strain BisA53).